A 126-amino-acid chain; its full sequence is Protein ApaG (126 aa).

Residues serine 2 to histidine 126 enclose the ApaG domain.

In Shewanella sp. (strain MR-4), this protein is Protein ApaG.